The chain runs to 322 residues: Phosphatidylserine decarboxylase proenzyme (322 aa).

Residues Asp90, His147, and Ser254 each act as charge relay system; for autoendoproteolytic cleavage activity in the active site. Ser254 serves as the catalytic Schiff-base intermediate with substrate; via pyruvic acid; for decarboxylase activity. The residue at position 254 (Ser254) is a Pyruvic acid (Ser); by autocatalysis. The interval 295-322 is disordered; sequence VEPAPLPTEEIKAEHDASPLVDNKKDDT. Basic and acidic residues predominate over residues 303-322; it reads EEIKAEHDASPLVDNKKDDT.

This sequence belongs to the phosphatidylserine decarboxylase family. PSD-B subfamily. Prokaryotic type I sub-subfamily. As to quaternary structure, heterodimer of a large membrane-associated beta subunit and a small pyruvoyl-containing alpha subunit. Pyruvate serves as cofactor. Post-translationally, is synthesized initially as an inactive proenzyme. Formation of the active enzyme involves a self-maturation process in which the active site pyruvoyl group is generated from an internal serine residue via an autocatalytic post-translational modification. Two non-identical subunits are generated from the proenzyme in this reaction, and the pyruvate is formed at the N-terminus of the alpha chain, which is derived from the carboxyl end of the proenzyme. The autoendoproteolytic cleavage occurs by a canonical serine protease mechanism, in which the side chain hydroxyl group of the serine supplies its oxygen atom to form the C-terminus of the beta chain, while the remainder of the serine residue undergoes an oxidative deamination to produce ammonia and the pyruvoyl prosthetic group on the alpha chain. During this reaction, the Ser that is part of the protease active site of the proenzyme becomes the pyruvoyl prosthetic group, which constitutes an essential element of the active site of the mature decarboxylase.

The protein localises to the cell membrane. It catalyses the reaction a 1,2-diacyl-sn-glycero-3-phospho-L-serine + H(+) = a 1,2-diacyl-sn-glycero-3-phosphoethanolamine + CO2. The protein operates within phospholipid metabolism; phosphatidylethanolamine biosynthesis; phosphatidylethanolamine from CDP-diacylglycerol: step 2/2. Functionally, catalyzes the formation of phosphatidylethanolamine (PtdEtn) from phosphatidylserine (PtdSer). This is Phosphatidylserine decarboxylase proenzyme from Salmonella agona (strain SL483).